Reading from the N-terminus, the 174-residue chain is Pectinesterase inhibitor 12 (174 aa).

An N-terminal signal peptide occupies residues 1–20; it reads MKFLVSLVIFSLFLNGFATA. 2 disulfides stabilise this stretch: Cys28-Cys43 and Cys100-Cys140. Asn129 carries N-linked (GlcNAc...) asparagine glycosylation.

This sequence belongs to the PMEI family.

The protein localises to the secreted. It is found in the extracellular space. Its subcellular location is the apoplast. In terms of biological role, pectin methylesterase (PME) inhibitor involved in the maintenance of cell wall integrity in response to necrotrophic pathogens. Modulates PME activity and pectin methylesterification during infection by Botrytis cinerea and contributes to resistance against the pathogen. This Arabidopsis thaliana (Mouse-ear cress) protein is Pectinesterase inhibitor 12.